The chain runs to 393 residues: Aspartate aminotransferase (393 aa).

L-aspartate is bound by residues glycine 38, tryptophan 124, and asparagine 174. Residue lysine 237 is modified to N6-(pyridoxal phosphate)lysine.

Belongs to the class-I pyridoxal-phosphate-dependent aminotransferase family. In terms of assembly, homodimer. The cofactor is pyridoxal 5'-phosphate.

The protein resides in the cytoplasm. It carries out the reaction L-aspartate + 2-oxoglutarate = oxaloacetate + L-glutamate. This chain is Aspartate aminotransferase (aspC), found in Geobacillus stearothermophilus (Bacillus stearothermophilus).